A 722-amino-acid polypeptide reads, in one-letter code: MQGQTTTVSFDGREIRLTTGRYAPQAGGSVLIECGDTAVLVTATQSPGREGADFLPLICDYEERLYAAGRIPGSFMRREGRPPERATLISRLIDRPLRPLFPSWMRDDIQVVATCLSLDERVPSDVLAVTASSMATLLAEIPFYGPMAAVRVGLLGDDFVLNPSFREIERGDLDLVVAGTPDGVVMIEAGANQLSEQDVIEAVDFGYEAVTELIKAQQSILKESGIDHKKPDEQEIDETLPNYLDKNGRKPIGELLKKFELTKKERDLKLEEIKTNLGEKIDSLKEDNAVKKAISSNPKLLTTSFKSLTKKLMREQIIKDGKRVDGRALDEVRKIEAAAGILPKRVHGSGLFQRGLTQVLSTATLGTPSDAQEMDDLNPSSDKTYIHHYNFPPYSVGETRPMRTPGRREVGHGALAERALIPVLPPKESFPYVLRVVSEVLSSNGSTSMGSVCGSTIALLDAGVPLKAPVSGAAMGLIKEGKEIRILTDIQGIEDFLGDMDFKVAGTEKGITALQMDMKVTGLEVKTIADAINQAKPARTHILEKMNETIDKPRETLSPHAPRLLSFRIDPELIGTVIGPGGRTIKGITERTNTKIDIEDGGIVTIASHDGVAAEEAQKIIEGLTRKVHEGEIFTGSITRIIPIGAFVEILPGKEGMIHISQLSEARVEKVEDVVKVGDEVTVRVREIDNRGRINLTLRGVSQNNNDMNYPQPTPTPVAPLN.

Residues Asp-495 and Asp-501 each coordinate Mg(2+). Residues 562–621 (PRLLSFRIDPELIGTVIGPGGRTIKGITERTNTKIDIEDGGIVTIASHDGVAAEEAQKII) enclose the KH domain. The S1 motif domain maps to 631 to 699 (GEIFTGSITR…NRGRINLTLR (69 aa)). Over residues 701–711 (VSQNNNDMNYP) the composition is skewed to polar residues. Positions 701–722 (VSQNNNDMNYPQPTPTPVAPLN) are disordered. Residues 712 to 722 (QPTPTPVAPLN) show a composition bias toward pro residues.

The protein belongs to the polyribonucleotide nucleotidyltransferase family. The cofactor is Mg(2+).

It is found in the cytoplasm. The enzyme catalyses RNA(n+1) + phosphate = RNA(n) + a ribonucleoside 5'-diphosphate. Functionally, involved in mRNA degradation. Catalyzes the phosphorolysis of single-stranded polyribonucleotides processively in the 3'- to 5'-direction. The protein is Polyribonucleotide nucleotidyltransferase of Prochlorococcus marinus (strain MIT 9211).